Here is a 964-residue protein sequence, read N- to C-terminus: Chaperone protein ClpB4, mitochondrial (964 aa).

Residues 1–39 (MALRRLSKSVSSAIKAQYTLSRPSPLLRSRSLSSSPHYT) constitute a mitochondrion transit peptide. The 145-residue stretch at 83–227 (VNQNEFTEMA…KDAIKDVRGD (145 aa)) folds into the Clp R domain. Repeat regions lie at residues 88-153 (FTEM…ISKQ) and 164-227 (LGSS…VRGD). The tract at residues 242-490 (LEKYGNDLTE…KLKMEITSKP (249 aa)) is i. Residues 287–294 (GEPGVGKT) and 690–697 (GPTGVGKT) contribute to the ATP site. The tract at residues 616 to 807 (VTDLDIAEIV…VVIMTSNIGS (192 aa)) is II.

The protein belongs to the ClpA/ClpB family.

It is found in the mitochondrion. Its function is as follows. Molecular chaperone that does not seem to be involved in heat stress response or tolerance. In Arabidopsis thaliana (Mouse-ear cress), this protein is Chaperone protein ClpB4, mitochondrial (CLPB4).